The primary structure comprises 89 residues: Small ribosomal subunit protein uS15 (89 aa).

The protein belongs to the universal ribosomal protein uS15 family. Part of the 30S ribosomal subunit. Forms a bridge to the 50S subunit in the 70S ribosome, contacting the 23S rRNA.

Its function is as follows. One of the primary rRNA binding proteins, it binds directly to 16S rRNA where it helps nucleate assembly of the platform of the 30S subunit by binding and bridging several RNA helices of the 16S rRNA. In terms of biological role, forms an intersubunit bridge (bridge B4) with the 23S rRNA of the 50S subunit in the ribosome. This chain is Small ribosomal subunit protein uS15, found in Geobacillus thermodenitrificans (strain NG80-2).